Consider the following 256-residue polypeptide: Type III pantothenate kinase 1 (256 aa).

6-13 (DIGNSHIF) lines the ATP pocket. 107 to 110 (GADR) serves as a coordination point for substrate. Residue aspartate 109 is the Proton acceptor of the active site. Residue aspartate 130 coordinates K(+). Position 133 (threonine 133) interacts with ATP. A substrate-binding site is contributed by threonine 185.

This sequence belongs to the type III pantothenate kinase family. In terms of assembly, homodimer. It depends on NH4(+) as a cofactor. The cofactor is K(+).

It localises to the cytoplasm. It carries out the reaction (R)-pantothenate + ATP = (R)-4'-phosphopantothenate + ADP + H(+). Its pathway is cofactor biosynthesis; coenzyme A biosynthesis; CoA from (R)-pantothenate: step 1/5. Functionally, catalyzes the phosphorylation of pantothenate (Pan), the first step in CoA biosynthesis. This Francisella tularensis subsp. holarctica (strain LVS) protein is Type III pantothenate kinase 1.